We begin with the raw amino-acid sequence, 82 residues long: Sodium channel neurotoxin MeuNaTxalpha-3 (82 aa).

Positions 1-8 (LVMAGVES) are cleaved as a signal peptide. Positions 10–80 (RDGHIARNNN…VPIKVPGDCH (71 aa)) constitute an LCN-type CS-alpha/beta domain. 4 cysteine pairs are disulfide-bonded: Cys20–Cys79, Cys24–Cys52, Cys38–Cys62, and Cys42–Cys64.

In terms of tissue distribution, expressed by the venom gland.

The protein localises to the secreted. Its function is as follows. Alpha toxins bind voltage-independently at site-3 of sodium channels (Nav) and inhibit the inactivation of the activated channels, thereby blocking neuronal transmission. The sequence is that of Sodium channel neurotoxin MeuNaTxalpha-3 from Mesobuthus eupeus (Lesser Asian scorpion).